The chain runs to 288 residues: Mortality factor 4-like protein 2 (288 aa).

Polar residues predominate over residues 1-15 (MSSRKQGSQPRGQQS). The interval 1–113 (MSSRKQGSQP…RADPTVESEE (113 aa)) is disordered. Ser71 is modified (phosphoserine). Positions 117–288 (NRMEVKVKIP…ASAEYHRKAL (172 aa)) constitute an MRG domain.

In terms of assembly, component of the NuA4 histone acetyltransferase complex which contains the catalytic subunit KAT5/TIP60 and the subunits EP400, TRRAP/PAF400, BRD8/SMAP, EPC1, DMAP1/DNMAP1, RUVBL1/TIP49, RUVBL2, ING3, actin, ACTL6A/BAF53A, MORF4L1/MRG15, MORF4L2/MRGX, MRGBP, YEATS4/GAS41 and VPS72/YL1. The NuA4 complex interacts with MYC and the adenovirus E1A protein. MORF4L1 may also participate in the formation of NuA4 related complexes which lack the KAT5/TIP60 catalytic subunit, but which include the SWI/SNF related protein SRCAP. Component of the MSIN3A histone deacetylase complex, which includes SIN3A, HDAC2, ARID4B, MORF4L1, RBBP4/RbAp48, and RBBP7/RbAp46. Interacts with MRFAP1 and RB1. May also interact with one or more as yet undefined members of the TLE (transducin-like enhancer of split) family of transcriptional repressors.

Its subcellular location is the nucleus. Its function is as follows. Component of the NuA4 histone acetyltransferase complex which is involved in transcriptional activation of select genes principally by acetylation of nucleosomal histone H4 and H2A. This modification may both alter nucleosome - DNA interactions and promote interaction of the modified histones with other proteins which positively regulate transcription. This complex may be required for the activation of transcriptional programs associated with oncogene and proto-oncogene mediated growth induction, tumor suppressor mediated growth arrest and replicative senescence, apoptosis, and DNA repair. The NuA4 complex ATPase and helicase activities seem to be, at least in part, contributed by the association of RUVBL1 and RUVBL2 with EP400. NuA4 may also play a direct role in DNA repair when directly recruited to sites of DNA damage. Also a component of the MSIN3A complex which acts to repress transcription by deacetylation of nucleosomal histones. The polypeptide is Mortality factor 4-like protein 2 (MORF4L2) (Homo sapiens (Human)).